We begin with the raw amino-acid sequence, 482 residues long: NADH-quinone oxidoreductase subunit N (482 aa).

The next 13 membrane-spanning stretches (helical) occupy residues 10–30 (ALGP…LILY), 44–64 (VGAI…PLGA), 77–97 (GFAR…LLLA), 113–133 (ILIV…DLIG), 166–186 (FVLG…VYGF), 206–226 (LGLV…LAAV), 243–265 (VTAF…VFIG), 277–296 (IIVF…AIGQ), 302–322 (LMAY…AAGT), 328–348 (GVVV…AVIL), 374–394 (AFCL…AGFF), 397–417 (FYVF…IGVV), and 451–471 (IVLA…APLV).

The protein belongs to the complex I subunit 2 family. As to quaternary structure, NDH-1 is composed of 14 different subunits. Subunits NuoA, H, J, K, L, M, N constitute the membrane sector of the complex.

It localises to the cell inner membrane. It carries out the reaction a quinone + NADH + 5 H(+)(in) = a quinol + NAD(+) + 4 H(+)(out). In terms of biological role, NDH-1 shuttles electrons from NADH, via FMN and iron-sulfur (Fe-S) centers, to quinones in the respiratory chain. The immediate electron acceptor for the enzyme in this species is believed to be ubiquinone. Couples the redox reaction to proton translocation (for every two electrons transferred, four hydrogen ions are translocated across the cytoplasmic membrane), and thus conserves the redox energy in a proton gradient. This chain is NADH-quinone oxidoreductase subunit N, found in Methylobacterium nodulans (strain LMG 21967 / CNCM I-2342 / ORS 2060).